The following is a 648-amino-acid chain: Transcription termination factor FttA (648 aa).

The tract at residues 1-179 (MIKRETQVDQ…QVGRNIYRKP (179 aa)) is not required for dimerization, required for cleavage at some sites. Residues 9–76 (DQILKDIRGI…ISIRPDPDVL (68 aa)) are KHa. The segment at 77-144 (LPPEEAEKLI…WAPKVVRTPP (68 aa)) is KHb. The metallo-beta-lactamase N-terminus stretch occupies residues 185-395 (WIRITGLGGF…LVMESTYGGA (211 aa)). His253, His255, Asp257, His258, His341, and Asp364 together coordinate Zn(2+). Residues 396–589 (NDIQMPREEA…MEVHTIDGFS (194 aa)) are beta-Casp. Positions 590-648 (GHADRRELMNYVAKVRPRPERVITVHGEPQKCLDLATSIHRKFGLSTRAPNNLDTIRLR) are metallo-beta-lactamase C-terminus. Position 615 (His615) interacts with Zn(2+).

This sequence belongs to the metallo-beta-lactamase superfamily. RNA-metabolizing metallo-beta-lactamase-like family. FttA subfamily. Homodimer. Interacts with RNA polymerase (RNAP), interacts with the Spt4-Spt5 complex. Requires Zn(2+) as cofactor.

With respect to regulation, endoRNase activity is inhibited by 1,10-phenanthroline. Its function is as follows. Terminates transcription on the whole genome. Termination is linked to FttA-mediated RNA cleavage and does not require NTP hydrolysis. Cleaves endonucleolytically at the RNA exit channel of RNA polymerase (RNAP); the 5'-3' exonuclease activity of this protein degrades the nascent RNA released from RNAP. In terms of biological role, a single-stranded endoribonuclease (endoRNase) with a preference for cleavage at CA dinucleotides. Has 5'-3' exoribonuclease (exoRNase) activity on 5'-monophosphorylated RNA; this activity does not occur on 5'-tri-phosphorylated or 5'-OH substrates. Also has weak activity 5'-3' exodeoxyribonuclease activity on ssDNA. The polypeptide is Transcription termination factor FttA (Pyrococcus abyssi (strain GE5 / Orsay)).